A 187-amino-acid chain; its full sequence is Ras-like protein rasD (187 aa).

10-17 (GGGGVGKS) is a GTP binding site. Residues 32–40 (YDPTIEDSY) carry the Effector region motif. Residues 57–61 (DTAGQ) and 116–119 (NKAD) contribute to the GTP site. Cys184 carries the post-translational modification Cysteine methyl ester. Residue Cys184 is the site of S-geranylgeranyl cysteine attachment. The propeptide at 185–187 (LIL) is removed in mature form.

It belongs to the small GTPase superfamily. Ras family.

The protein localises to the cell membrane. It carries out the reaction GTP + H2O = GDP + phosphate + H(+). With respect to regulation, alternates between an inactive form bound to GDP and an active form bound to GTP. Activated by a guanine nucleotide-exchange factor (GEF) and inactivated by a GTPase-activating protein (GAP). Its function is as follows. Ras proteins bind GDP/GTP and possess intrinsic GTPase activity. The sequence is that of Ras-like protein rasD (rasD) from Dictyostelium discoideum (Social amoeba).